An 82-amino-acid chain; its full sequence is Large ribosomal subunit protein bL31B (82 aa).

Belongs to the bacterial ribosomal protein bL31 family. Type B subfamily. In terms of assembly, part of the 50S ribosomal subunit.

The protein is Large ribosomal subunit protein bL31B of Dichelobacter nodosus (strain VCS1703A).